The following is a 290-amino-acid chain: Glutamate 5-kinase (290 aa).

Position 21 (lysine 21) interacts with ATP. Residues serine 60, aspartate 151, and asparagine 163 each coordinate substrate. Residue 217–223 (TGGMFTK) participates in ATP binding.

Belongs to the glutamate 5-kinase family.

Its subcellular location is the cytoplasm. The catalysed reaction is L-glutamate + ATP = L-glutamyl 5-phosphate + ADP. It functions in the pathway amino-acid biosynthesis; L-proline biosynthesis; L-glutamate 5-semialdehyde from L-glutamate: step 1/2. Its function is as follows. Catalyzes the transfer of a phosphate group to glutamate to form L-glutamate 5-phosphate. The protein is Glutamate 5-kinase of Leptospira interrogans serogroup Icterohaemorrhagiae serovar copenhageni (strain Fiocruz L1-130).